The following is a 401-amino-acid chain: Sodium/glutamate symporter (401 aa).

Residues 1 to 6 lie on the Periplasmic side of the membrane; sequence MFHLDT. The helical transmembrane segment at 7–24 threads the bilayer; that stretch reads LATLVAATLTLLLGRKLV. The Cytoplasmic portion of the chain corresponds to 25 to 32; that stretch reads HSVSFLKK. A helical membrane pass occupies residues 33–52; sequence YTIPEPVAGGLLVALALLVL. Over 53–69 the chain is Periplasmic; sequence KKSMGWEVNFDMSLRDP. Residues 70–87 form a helical membrane-spanning segment; that stretch reads LMLAFFATIGLNANIASL. Topologically, residues 88–93 are cytoplasmic; that stretch reads RAGGRV. The chain crosses the membrane as a helical span at residues 94-116; the sequence is VGIFLIVVVGLLVMQNAIGIGMA. Topologically, residues 117-156 are periplasmic; it reads SLLGLDPLMGLLAGSITLSGGHGTGAAWSKLFIERYGFTN. Residues 157-179 form a helical membrane-spanning segment; sequence ATEVAMACATFGLVLGGLIGGPV. Topologically, residues 180–212 are cytoplasmic; the sequence is ARYLVKHSTTPNGIPDDQEVPTAFEKPDVGRMI. Residues 213 to 235 traverse the membrane as a helical segment; that stretch reads TSLVLIETIALIAICLTVGKIVA. Residues 236–244 lie on the Periplasmic side of the membrane; sequence QLLAGTAFE. Residues 245 to 267 traverse the membrane as a helical segment; the sequence is LPTFVCVLFVGVILSNGLSIMGF. Residues 268 to 276 are Cytoplasmic-facing; sequence YRVFERAVS. Residues 277 to 292 traverse the membrane as a helical segment; that stretch reads VLGNVSLSLFLAMALM. Topologically, residues 293-301 are periplasmic; that stretch reads GLKLWELAS. A helical membrane pass occupies residues 302-324; sequence LALPMLAILVVQTIFMALYAIFV. Residues 325–367 are Cytoplasmic-facing; sequence TWRMMGKNYDAAVLAAGHCGFGLGATPTAIANMQAITERFGPS. A helical transmembrane segment spans residues 368–390; it reads HMAFLVVPMVGAFFIDIVNALVI. Residues 391 to 401 lie on the Periplasmic side of the membrane; sequence KLYLMLPIFAG.

Belongs to the glutamate:Na(+) symporter (ESS) (TC 2.A.27) family.

It is found in the cell inner membrane. Inhibited by the uncoupler carbonylcyanide m-chlorophenylhydrazone (CCCP) and the ionophore monensin. In terms of biological role, catalyzes the sodium-dependent, binding-protein-independent transport of glutamate. This chain is Sodium/glutamate symporter, found in Escherichia coli (strain K12).